The following is a 639-amino-acid chain: Threonine--tRNA ligase (639 aa).

Residues M1–T61 form the TGS domain. The segment at D242–P532 is catalytic. Positions 333, 384, and 509 each coordinate Zn(2+).

The protein belongs to the class-II aminoacyl-tRNA synthetase family. In terms of assembly, homodimer. The cofactor is Zn(2+).

It is found in the cytoplasm. The enzyme catalyses tRNA(Thr) + L-threonine + ATP = L-threonyl-tRNA(Thr) + AMP + diphosphate + H(+). Catalyzes the attachment of threonine to tRNA(Thr) in a two-step reaction: L-threonine is first activated by ATP to form Thr-AMP and then transferred to the acceptor end of tRNA(Thr). Also edits incorrectly charged L-seryl-tRNA(Thr). The sequence is that of Threonine--tRNA ligase from Clostridium tetani (strain Massachusetts / E88).